We begin with the raw amino-acid sequence, 212 residues long: 2-hydroxychromene-2-carboxylate isomerase (212 aa).

Residue Ser-24 is the Nucleophile of the active site. Glutathione is bound at residue Ser-24. Residues Lys-56, 66 to 67 (NR), and Tyr-97 contribute to the substrate site. Glutathione contacts are provided by residues Val-181 and 192–195 (WGND).

This sequence belongs to the GST superfamily. NadH family. Requires glutathione as cofactor.

The catalysed reaction is 2-hydroxychromene-2-carboxylate = (3E)-4-(2-hydroxyphenyl)-2-oxobut-3-enoate. It participates in aromatic compound metabolism; naphthalene degradation. In terms of biological role, involved in the naphthalene catabolic pathway. Catalyzes the reversible glutathione-dependent isomerization of 2-hydroxychromene-2-carboxylate (HCCA) to trans-O-hydroxybenzylidenepyruvate (THBPA). The polypeptide is 2-hydroxychromene-2-carboxylate isomerase (doxJ) (Pseudomonas sp. (strain C18)).